The sequence spans 208 residues: FMN-dependent NADH:quinone oxidoreductase 1 (208 aa).

The protein belongs to the azoreductase type 1 family. In terms of assembly, homodimer. It depends on FMN as a cofactor.

The enzyme catalyses 2 a quinone + NADH + H(+) = 2 a 1,4-benzosemiquinone + NAD(+). The catalysed reaction is N,N-dimethyl-1,4-phenylenediamine + anthranilate + 2 NAD(+) = 2-(4-dimethylaminophenyl)diazenylbenzoate + 2 NADH + 2 H(+). Quinone reductase that provides resistance to thiol-specific stress caused by electrophilic quinones. Functionally, also exhibits azoreductase activity. Catalyzes the reductive cleavage of the azo bond in aromatic azo compounds to the corresponding amines. This is FMN-dependent NADH:quinone oxidoreductase 1 from Bacillus cereus (strain ATCC 14579 / DSM 31 / CCUG 7414 / JCM 2152 / NBRC 15305 / NCIMB 9373 / NCTC 2599 / NRRL B-3711).